Reading from the N-terminus, the 351-residue chain is Fructose-1,6-bisphosphatase class 1 1 (351 aa).

Positions 84, 106, 108, and 109 each coordinate Mg(2+). Substrate contacts are provided by residues Asp109–Ser112 and Asn205. Glu277 contacts Mg(2+).

This sequence belongs to the FBPase class 1 family. Homotetramer. Mg(2+) is required as a cofactor.

It is found in the cytoplasm. It catalyses the reaction beta-D-fructose 1,6-bisphosphate + H2O = beta-D-fructose 6-phosphate + phosphate. Its pathway is carbohydrate biosynthesis; Calvin cycle. The chain is Fructose-1,6-bisphosphatase class 1 1 from Methylibium petroleiphilum (strain ATCC BAA-1232 / LMG 22953 / PM1).